Reading from the N-terminus, the 285-residue chain is 4-hydroxybenzoate octaprenyltransferase (285 aa).

7 consecutive transmembrane segments (helical) span residues 17-37 (PVGI…AGAG), 41-61 (PKVL…GCVI), 92-112 (LLLF…LNPL), 135-155 (HWPQ…AFAA), 158-178 (GTVP…ATVY), 216-236 (ALLL…YYYL), and 263-283 (AFLN…LHYL).

This sequence belongs to the UbiA prenyltransferase family. The cofactor is Mg(2+).

The protein resides in the cell inner membrane. It carries out the reaction all-trans-octaprenyl diphosphate + 4-hydroxybenzoate = 4-hydroxy-3-(all-trans-octaprenyl)benzoate + diphosphate. The protein operates within cofactor biosynthesis; ubiquinone biosynthesis. In terms of biological role, catalyzes the prenylation of para-hydroxybenzoate (PHB) with an all-trans polyprenyl group. Mediates the second step in the final reaction sequence of ubiquinone-8 (UQ-8) biosynthesis, which is the condensation of the polyisoprenoid side chain with PHB, generating the first membrane-bound Q intermediate 3-octaprenyl-4-hydroxybenzoate. The protein is 4-hydroxybenzoate octaprenyltransferase of Nitrosococcus oceani (strain ATCC 19707 / BCRC 17464 / JCM 30415 / NCIMB 11848 / C-107).